The sequence spans 432 residues: Alpha-galactosidase (432 aa).

2-68 is a binding site for NAD(+); that stretch reads KKITFIGAGS…PSVAINSYDD (67 aa). N148 is a binding site for substrate. C169 provides a ligand contact to Mn(2+). H170 acts as the Proton donor in catalysis. A Mn(2+)-binding site is contributed by H199.

This sequence belongs to the glycosyl hydrolase 4 family. Homodimer. Mn(2+) is required as a cofactor. NAD(+) serves as cofactor.

Its subcellular location is the cytoplasm. The enzyme catalyses Hydrolysis of terminal, non-reducing alpha-D-galactose residues in alpha-D-galactosides, including galactose oligosaccharides, galactomannans and galactolipids.. Functionally, catalyzes the hydrolysis of melibiose and alpha-galactosides of the raffinose family of oligosaccharides (RFOs) such as raffinose and stachyose. Cannot act on polymeric substrates such as locust bean gum. This chain is Alpha-galactosidase, found in Bacillus subtilis (strain 168).